The sequence spans 480 residues: Protein nucleotidyltransferase YdiU (480 aa).

Glycine 86, glycine 88, arginine 89, lysine 109, aspartate 121, glycine 122, arginine 172, and arginine 179 together coordinate ATP. Aspartate 248 functions as the Proton acceptor in the catalytic mechanism. Mg(2+) is bound by residues asparagine 249 and aspartate 258. Aspartate 258 lines the ATP pocket.

The protein belongs to the SELO family. It depends on Mg(2+) as a cofactor. The cofactor is Mn(2+).

The catalysed reaction is L-seryl-[protein] + ATP = 3-O-(5'-adenylyl)-L-seryl-[protein] + diphosphate. It carries out the reaction L-threonyl-[protein] + ATP = 3-O-(5'-adenylyl)-L-threonyl-[protein] + diphosphate. It catalyses the reaction L-tyrosyl-[protein] + ATP = O-(5'-adenylyl)-L-tyrosyl-[protein] + diphosphate. The enzyme catalyses L-histidyl-[protein] + UTP = N(tele)-(5'-uridylyl)-L-histidyl-[protein] + diphosphate. The catalysed reaction is L-seryl-[protein] + UTP = O-(5'-uridylyl)-L-seryl-[protein] + diphosphate. It carries out the reaction L-tyrosyl-[protein] + UTP = O-(5'-uridylyl)-L-tyrosyl-[protein] + diphosphate. In terms of biological role, nucleotidyltransferase involved in the post-translational modification of proteins. It can catalyze the addition of adenosine monophosphate (AMP) or uridine monophosphate (UMP) to a protein, resulting in modifications known as AMPylation and UMPylation. This is Protein nucleotidyltransferase YdiU from Enterobacter sp. (strain 638).